Here is a 288-residue protein sequence, read N- to C-terminus: MPELPEVEVTRLGLVPHLTGRRIVRAVVRHHGLRWPVDPALPELLGGRTVARVLRRGKYLLIECVPDIAHGPQAGAGWLLVHLGMTGTLRVLETPAAPGTHDHLDIELADAAGRPITLRYRDPRRFGAVLWHDGDEAALSAHPLLRNLGIEPFDTRFDGDWMYARTRGRSAAIKTVLLAGDIVVGVGNIYCSESLFRAGIRPTTAAGRISRPRYAALAEAIRATLADAIARGGSTLRDFVGSDGQSGYFQLDALVYDRAGLPCRVCGTPIRQIVQGQRSTFYCPACQR.

The active-site Schiff-base intermediate with DNA is Pro2. Glu3 functions as the Proton donor in the catalytic mechanism. Catalysis depends on Lys58, which acts as the Proton donor; for beta-elimination activity. The DNA site is built by His101, Arg124, and Arg169. The FPG-type zinc finger occupies 254-288 (LVYDRAGLPCRVCGTPIRQIVQGQRSTFYCPACQR). Arg278 (proton donor; for delta-elimination activity) is an active-site residue.

This sequence belongs to the FPG family. As to quaternary structure, monomer. The cofactor is Zn(2+).

The catalysed reaction is Hydrolysis of DNA containing ring-opened 7-methylguanine residues, releasing 2,6-diamino-4-hydroxy-5-(N-methyl)formamidopyrimidine.. The enzyme catalyses 2'-deoxyribonucleotide-(2'-deoxyribose 5'-phosphate)-2'-deoxyribonucleotide-DNA = a 3'-end 2'-deoxyribonucleotide-(2,3-dehydro-2,3-deoxyribose 5'-phosphate)-DNA + a 5'-end 5'-phospho-2'-deoxyribonucleoside-DNA + H(+). Functionally, involved in base excision repair of DNA damaged by oxidation or by mutagenic agents. Acts as a DNA glycosylase that recognizes and removes damaged bases. Has a preference for oxidized purines, such as 7,8-dihydro-8-oxoguanine (8-oxoG). Has AP (apurinic/apyrimidinic) lyase activity and introduces nicks in the DNA strand. Cleaves the DNA backbone by beta-delta elimination to generate a single-strand break at the site of the removed base with both 3'- and 5'-phosphates. The sequence is that of Formamidopyrimidine-DNA glycosylase from Ralstonia nicotianae (strain ATCC BAA-1114 / GMI1000) (Ralstonia solanacearum).